A 397-amino-acid polypeptide reads, in one-letter code: Ribosomal RNA processing protein 1 homolog (397 aa).

Over residues 334–343 the composition is skewed to basic and acidic residues; the sequence is EAAEAARQEN. Residues 334-366 form a disordered region; the sequence is EAAEAARQENGDDVPDDEIAEVKKGNGKKTAVP.

Belongs to the RRP1 family.

It is found in the nucleus. Its function is as follows. May be involved in the generation of 28S rRNA. In Caenorhabditis elegans, this protein is Ribosomal RNA processing protein 1 homolog.